Reading from the N-terminus, the 82-residue chain is Envelope small membrane protein (82 aa).

The Virion surface portion of the chain corresponds to 1–16; the sequence is MLPFVQEQIGAFIVNF. The helical transmembrane segment at 17–37 threads the bilayer; the sequence is FILSVVCAVTLVVCLAILTAI. At 38-78 the chain is on the intravirion side; it reads RLCVQCVSGCHTLVFLPAVHIYNTGRAAYVKFQESHPPYPP.

This sequence belongs to the betacoronaviruses E protein family. As to quaternary structure, homopentamer. Interacts with membrane protein M in the budding compartment of the host cell, which is located between endoplasmic reticulum and the Golgi complex. Interacts with Nucleoprotein.

The protein resides in the host Golgi apparatus membrane. Plays a central role in virus morphogenesis and assembly. Acts as a viroporin and self-assembles in host membranes forming pentameric protein-lipid pores that allow ion transport. Also plays a role in the induction of apoptosis. This Pipistrellus abramus (Japanese pipistrelle) protein is Envelope small membrane protein.